The following is a 57-amino-acid chain: Large ribosomal subunit protein bL32c (57 aa).

The protein belongs to the bacterial ribosomal protein bL32 family.

The protein resides in the plastid. The protein localises to the chloroplast. This is Large ribosomal subunit protein bL32c from Acorus calamus (Sweet flag).